A 494-amino-acid polypeptide reads, in one-letter code: Putative myristoylated protein 006R (494 aa).

The N-myristoyl glycine; by host moiety is linked to residue G2. Transmembrane regions (helical) follow at residues 193–213 (VAALVAIVLGVPVVSVIGGIA), 214–234 (VAGRWMFPISILAGAGCLVVW), and 465–485 (WLLYLGVALIIVGIFGSILAF).

The protein belongs to the IIV-6 118L/458R family.

Its subcellular location is the membrane. This chain is Putative myristoylated protein 006R, found in Aedes vexans (Inland floodwater mosquito).